Here is a 484-residue protein sequence, read N- to C-terminus: tRNA sulfurtransferase (484 aa).

The THUMP domain occupies 63 to 167; sequence QAFGERLACI…RDNLYMVTKR (105 aa). ATP contacts are provided by residues 185 to 186, Lys267, Gly289, and Gln298; that span reads LI. The cysteines at positions 346 and 458 are disulfide-linked. The 79-residue stretch at 406–484 folds into the Rhodanese domain; the sequence is IDTNQVVIDI…GYTNVKVYRP (79 aa). The active-site Cysteine persulfide intermediate is the Cys458.

Belongs to the ThiI family.

The protein localises to the cytoplasm. The enzyme catalyses [ThiI sulfur-carrier protein]-S-sulfanyl-L-cysteine + a uridine in tRNA + 2 reduced [2Fe-2S]-[ferredoxin] + ATP + H(+) = [ThiI sulfur-carrier protein]-L-cysteine + a 4-thiouridine in tRNA + 2 oxidized [2Fe-2S]-[ferredoxin] + AMP + diphosphate. The catalysed reaction is [ThiS sulfur-carrier protein]-C-terminal Gly-Gly-AMP + S-sulfanyl-L-cysteinyl-[cysteine desulfurase] + AH2 = [ThiS sulfur-carrier protein]-C-terminal-Gly-aminoethanethioate + L-cysteinyl-[cysteine desulfurase] + A + AMP + 2 H(+). It functions in the pathway cofactor biosynthesis; thiamine diphosphate biosynthesis. In terms of biological role, catalyzes the ATP-dependent transfer of a sulfur to tRNA to produce 4-thiouridine in position 8 of tRNAs, which functions as a near-UV photosensor. Also catalyzes the transfer of sulfur to the sulfur carrier protein ThiS, forming ThiS-thiocarboxylate. This is a step in the synthesis of thiazole, in the thiamine biosynthesis pathway. The sulfur is donated as persulfide by IscS. The chain is tRNA sulfurtransferase from Shewanella baltica (strain OS155 / ATCC BAA-1091).